The chain runs to 365 residues: uncharacterized protein (365 aa).

This is an uncharacterized protein from Archaeoglobus fulgidus (strain ATCC 49558 / DSM 4304 / JCM 9628 / NBRC 100126 / VC-16).